We begin with the raw amino-acid sequence, 352 residues long: Rhodopsin (352 aa).

Topologically, residues methionine 1–alanine 36 are extracellular. Residues asparagine 2 and asparagine 15 are each glycosylated (N-linked (GlcNAc...) asparagine). Residues tyrosine 37–valine 61 traverse the membrane as a helical segment. Topologically, residues threonine 62–asparagine 73 are cytoplasmic. Residues tyrosine 74–tyrosine 96 form a helical membrane-spanning segment. The Extracellular portion of the chain corresponds to threonine 97 to cysteine 110. Residues cysteine 110 and cysteine 187 are joined by a disulfide bond. The chain crosses the membrane as a helical span at residues asparagine 111–isoleucine 133. The short motif at glutamate 134 to tryptophan 136 is the 'Ionic lock' involved in activated form stabilization element. The Cytoplasmic portion of the chain corresponds to glutamate 134–histidine 152. The helical transmembrane segment at alanine 153–valine 173 threads the bilayer. The Extracellular segment spans residues glycine 174 to serine 202. A helical membrane pass occupies residues phenylalanine 203 to glycine 224. Over arginine 225 to arginine 252 the chain is Cytoplasmic. A helical transmembrane segment spans residues methionine 253–tryptophan 274. Residues isoleucine 275 to isoleucine 286 lie on the Extracellular side of the membrane. Residues phenylalanine 287–cysteine 308 form a helical membrane-spanning segment. Lysine 296 bears the N6-(retinylidene)lysine mark. Over leucine 309–alanine 352 the chain is Cytoplasmic. S-palmitoyl cysteine attachment occurs at residues cysteine 322 and cysteine 323. Residues glutamate 331 to alanine 352 are disordered. The span at alanine 334–alanine 352 shows a compositional bias: low complexity.

It belongs to the G-protein coupled receptor 1 family. Opsin subfamily. Post-translationally, phosphorylated on some or all of the serine and threonine residues present in the C-terminal region. In terms of processing, contains one covalently linked retinal chromophore.

The protein resides in the membrane. It localises to the cell projection. The protein localises to the cilium. Its subcellular location is the photoreceptor outer segment. In terms of biological role, photoreceptor required for image-forming vision at low light intensity. While most salt water fish species use retinal as chromophore, most freshwater fish use 3-dehydroretinal, or a mixture of retinal and 3-dehydroretinal. Light-induced isomerization of 11-cis to all-trans retinal triggers a conformational change that activates signaling via G-proteins. Subsequent receptor phosphorylation mediates displacement of the bound G-protein alpha subunit by arrestin and terminates signaling. The polypeptide is Rhodopsin (rho) (Psalidodon fasciatus (Banded astyanax)).